The sequence spans 308 residues: Porphobilinogen deaminase (308 aa).

Cysteine 240 bears the S-(dipyrrolylmethanemethyl)cysteine mark.

The protein belongs to the HMBS family. As to quaternary structure, monomer. Requires dipyrromethane as cofactor.

It catalyses the reaction 4 porphobilinogen + H2O = hydroxymethylbilane + 4 NH4(+). It functions in the pathway porphyrin-containing compound metabolism; protoporphyrin-IX biosynthesis; coproporphyrinogen-III from 5-aminolevulinate: step 2/4. Tetrapolymerization of the monopyrrole PBG into the hydroxymethylbilane pre-uroporphyrinogen in several discrete steps. The chain is Porphobilinogen deaminase from Laribacter hongkongensis (strain HLHK9).